A 320-amino-acid polypeptide reads, in one-letter code: MLIDQFGRKINYLRISVTQRCNFRCLYCMPKIPFDYQPKENLLSFEELFLFVKAAIDEGIEKIRITGGEPLLRKDLSIFIKMISDYKSDIDLAITTNGFLLKDFAKDLKNAGLKRLNISLDTLDHKKAKTLAQKDVLDSVLSGIDEALNLDLKVKLNTVALKNLNDDELISLLEFAKSKKAQIRFIEFMENTHAYGKLQGLKRDEIIQILSQKYQIQLIKKDEKAPVSIYKADDYEFGIIDPHSHEFCDSCNRIRLSAEGLLIPCLYFDEALSIKEAVRKGDIKAAVEILQEVLRNKPEKNKWSVVDNETSSRAFYQTGG.

The Radical SAM core domain occupies 5–225 (QFGRKINYLR…IQLIKKDEKA (221 aa)). Arg14 serves as a coordination point for GTP. Cys21 and Cys25 together coordinate [4Fe-4S] cluster. Tyr27 serves as a coordination point for S-adenosyl-L-methionine. Cys28 provides a ligand contact to [4Fe-4S] cluster. Residue Arg64 coordinates GTP. Gly68 is a binding site for S-adenosyl-L-methionine. Thr95 provides a ligand contact to GTP. An S-adenosyl-L-methionine-binding site is contributed by Ser119. Lys155 is a binding site for GTP. Met189 is a binding site for S-adenosyl-L-methionine. 2 residues coordinate [4Fe-4S] cluster: Cys248 and Cys251. Residue 253-255 (RIR) participates in GTP binding. A [4Fe-4S] cluster-binding site is contributed by Cys265.

The protein belongs to the radical SAM superfamily. MoaA family. In terms of assembly, monomer and homodimer. It depends on [4Fe-4S] cluster as a cofactor.

It carries out the reaction GTP + AH2 + S-adenosyl-L-methionine = (8S)-3',8-cyclo-7,8-dihydroguanosine 5'-triphosphate + 5'-deoxyadenosine + L-methionine + A + H(+). It participates in cofactor biosynthesis; molybdopterin biosynthesis. Catalyzes the cyclization of GTP to (8S)-3',8-cyclo-7,8-dihydroguanosine 5'-triphosphate. The protein is GTP 3',8-cyclase of Campylobacter jejuni subsp. jejuni serotype O:6 (strain 81116 / NCTC 11828).